We begin with the raw amino-acid sequence, 68 residues long: Protein transport protein Sec61 subunit gamma (68 aa).

Topologically, residues 1 to 32 are cytoplasmic; sequence MDQVMQFVEPSRQFVKDSIRLVKRCTKPDRKE. Residues 33-61 form a helical membrane-spanning segment; that stretch reads FQKVAMATAIGFAIMGFIGFFVKLIHIPI. Topologically, residues 62–68 are extracellular; the sequence is NNIIVGG.

The protein belongs to the SecE/SEC61-gamma family. In terms of assembly, the SEC61 channel-forming translocon complex consists of channel-forming core components SEC61A1, SEC61B and SEC61G and different auxiliary components such as SEC62 and SEC63. The SEC61 channel associates with the multi-pass translocon (MPT) complex.

It localises to the endoplasmic reticulum membrane. Component of SEC61 channel-forming translocon complex that mediates transport of signal peptide-containing precursor polypeptides across the endoplasmic reticulum (ER). Forms a ribosome receptor and a gated pore in the ER membrane, both functions required for cotranslational translocation of nascent polypeptides. The SEC61 channel is also involved in ER membrane insertion of transmembrane proteins: it mediates membrane insertion of the first few transmembrane segments of proteins, while insertion of subsequent transmembrane regions of multi-pass membrane proteins is mediated by the multi-pass translocon (MPT) complex. The chain is Protein transport protein Sec61 subunit gamma (sec61g) from Harpagifer antarcticus (Antarctic spiny plunderfish).